The following is a 356-amino-acid chain: Histidinol-phosphate aminotransferase (356 aa).

Position 214 is an N6-(pyridoxal phosphate)lysine (K214).

This sequence belongs to the class-II pyridoxal-phosphate-dependent aminotransferase family. Histidinol-phosphate aminotransferase subfamily. Homodimer. Requires pyridoxal 5'-phosphate as cofactor.

It carries out the reaction L-histidinol phosphate + 2-oxoglutarate = 3-(imidazol-4-yl)-2-oxopropyl phosphate + L-glutamate. Its pathway is amino-acid biosynthesis; L-histidine biosynthesis; L-histidine from 5-phospho-alpha-D-ribose 1-diphosphate: step 7/9. This Shigella sonnei (strain Ss046) protein is Histidinol-phosphate aminotransferase.